The chain runs to 484 residues: Cobyric acid synthase (484 aa).

Residues 251-438 (ALKIAVPVLP…LHGLFCSDAY (188 aa)) form the GATase cobBQ-type domain. C333 serves as the catalytic Nucleophile. Residue H430 is part of the active site.

It belongs to the CobB/CobQ family. CobQ subfamily.

It functions in the pathway cofactor biosynthesis; adenosylcobalamin biosynthesis. Its function is as follows. Catalyzes amidations at positions B, D, E, and G on adenosylcobyrinic A,C-diamide. NH(2) groups are provided by glutamine, and one molecule of ATP is hydrogenolyzed for each amidation. The sequence is that of Cobyric acid synthase from Rhizobium rhizogenes (strain K84 / ATCC BAA-868) (Agrobacterium radiobacter).